A 592-amino-acid polypeptide reads, in one-letter code: MMRTHYCGSLTEAQIDQTVTLCGWVHRRRDHGGVIFLDMRDRDGLVQVVIDPDTPEAFATADKARSEYVLKITGRVRRRYEGTENPNMVSGQIEVLGKEIEVLAASETPPFPLNDDTINVSEEHRLKYRFLDIRRPEMLERLRFRSKVTNLIRNYLDDHGFLDVETPILTRATPEGARDYLVPSRVQNGSFYALPQSPQLFKQLLMVGGIDRYYQIAKCFRDEDLRADRQPEFTQIDIETSFLNDDDIMDLMEGMTIKLFNDLLGVKFEKFRRMPYSEAMRDYASDKPDLRIPLKLVDVADLMQEVEFKVFAGPAKDPKGRIAALRVPGAGSLTRSQIDEYTKFVGIYGAKGLAYIKVNEIEKGIEGLQSPIVKFIEPIVMQLLERVGAENGDIVFFGADKAKIVNDAMGALRVKIGHDLNLATCEWAPLWVVDFPMFEETDDGKWTSVHHPFTLPKSSVEDVKSNPGEALSVAYDMVLNGTEVGGGSLRIYTLEMQKAIFEALGISDEEAEEKFSFLLNALRYGAPPHGGLAFGLDRLVMLMTGATSIRDVIAFPKTKTAECPLTQAPAPVEANQLRDLGIRLREQQKKEA.

Glu-175 serves as a coordination point for L-aspartate. Residues 199–202 (QLFK) are aspartate. Residue Arg-221 participates in L-aspartate binding. ATP contacts are provided by residues 221 to 223 (RDE) and Gln-230. His-450 serves as a coordination point for L-aspartate. Glu-483 contacts ATP. Residue Arg-490 participates in L-aspartate binding. 535-538 (GLDR) serves as a coordination point for ATP.

Belongs to the class-II aminoacyl-tRNA synthetase family. Type 1 subfamily. In terms of assembly, homodimer.

It is found in the cytoplasm. It catalyses the reaction tRNA(Asx) + L-aspartate + ATP = L-aspartyl-tRNA(Asx) + AMP + diphosphate. Its function is as follows. Aspartyl-tRNA synthetase with relaxed tRNA specificity since it is able to aspartylate not only its cognate tRNA(Asp) but also tRNA(Asn). Reaction proceeds in two steps: L-aspartate is first activated by ATP to form Asp-AMP and then transferred to the acceptor end of tRNA(Asp/Asn). The polypeptide is Aspartate--tRNA(Asp/Asn) ligase (Acinetobacter baumannii (strain ATCC 17978 / DSM 105126 / CIP 53.77 / LMG 1025 / NCDC KC755 / 5377)).